We begin with the raw amino-acid sequence, 71 residues long: UPF0434 protein Csal_1588 (71 aa).

This sequence belongs to the UPF0434 family.

The sequence is that of UPF0434 protein Csal_1588 from Chromohalobacter salexigens (strain ATCC BAA-138 / DSM 3043 / CIP 106854 / NCIMB 13768 / 1H11).